Reading from the N-terminus, the 168-residue chain is Phosphopantetheine adenylyltransferase (168 aa).

Thr-14 contacts substrate. ATP is bound by residues 14–15 (TF) and His-22. Residues Lys-46, Leu-78, and Arg-92 each contribute to the substrate site. ATP-binding positions include 93–95 (GLR), Glu-103, and 128–134 (YSFISSS).

This sequence belongs to the bacterial CoaD family. In terms of assembly, homohexamer. Requires Mg(2+) as cofactor.

The protein resides in the cytoplasm. It carries out the reaction (R)-4'-phosphopantetheine + ATP + H(+) = 3'-dephospho-CoA + diphosphate. It functions in the pathway cofactor biosynthesis; coenzyme A biosynthesis; CoA from (R)-pantothenate: step 4/5. Functionally, reversibly transfers an adenylyl group from ATP to 4'-phosphopantetheine, yielding dephospho-CoA (dPCoA) and pyrophosphate. This chain is Phosphopantetheine adenylyltransferase, found in Xanthomonas axonopodis pv. citri (strain 306).